The following is a 122-amino-acid chain: Large ribosomal subunit protein uL14 (122 aa).

It belongs to the universal ribosomal protein uL14 family. Part of the 50S ribosomal subunit. Forms a cluster with proteins L3 and L19. In the 70S ribosome, L14 and L19 interact and together make contacts with the 16S rRNA in bridges B5 and B8.

Binds to 23S rRNA. Forms part of two intersubunit bridges in the 70S ribosome. This Ligilactobacillus salivarius (strain UCC118) (Lactobacillus salivarius) protein is Large ribosomal subunit protein uL14.